The following is a 330-amino-acid chain: Ribosomal RNA small subunit methyltransferase H (330 aa).

S-adenosyl-L-methionine is bound by residues 51-53 (GGH), aspartate 70, aspartate 118, and glutamine 125. The tract at residues 276–330 (STDSTPPGLPVPLPDRQPELRLLTRGAELPTEQETAANPRAASARLRAAERTREP) is disordered. Positions 311–321 (AANPRAASARL) are enriched in low complexity.

This sequence belongs to the methyltransferase superfamily. RsmH family.

It is found in the cytoplasm. The catalysed reaction is cytidine(1402) in 16S rRNA + S-adenosyl-L-methionine = N(4)-methylcytidine(1402) in 16S rRNA + S-adenosyl-L-homocysteine + H(+). Functionally, specifically methylates the N4 position of cytidine in position 1402 (C1402) of 16S rRNA. The polypeptide is Ribosomal RNA small subunit methyltransferase H (Thermobifida fusca (strain YX)).